Here is a 384-residue protein sequence, read N- to C-terminus: Putative glutamate--cysteine ligase 2 (384 aa).

Belongs to the glutamate--cysteine ligase type 2 family. YbdK subfamily.

It carries out the reaction L-cysteine + L-glutamate + ATP = gamma-L-glutamyl-L-cysteine + ADP + phosphate + H(+). Functionally, ATP-dependent carboxylate-amine ligase which exhibits weak glutamate--cysteine ligase activity. In Dechloromonas aromatica (strain RCB), this protein is Putative glutamate--cysteine ligase 2.